The chain runs to 77 residues: UPF0337 protein CE0198 (77 aa).

The disordered stretch occupies residues 1–77 (MGDLSNKAEG…PDVEHPEAVN (77 aa)). 2 stretches are compositionally biased toward basic and acidic residues: residues 30-56 (DEGR…KDGA) and 64-77 (QDKD…EAVN).

It belongs to the UPF0337 (CsbD) family.

The protein is UPF0337 protein CE0198 of Corynebacterium efficiens (strain DSM 44549 / YS-314 / AJ 12310 / JCM 11189 / NBRC 100395).